A 308-amino-acid polypeptide reads, in one-letter code: Aspartate carbamoyltransferase catalytic subunit (308 aa).

Residues Arg-50 and Thr-51 each coordinate carbamoyl phosphate. Lys-78 serves as a coordination point for L-aspartate. 3 residues coordinate carbamoyl phosphate: Arg-100, His-131, and Gln-134. Arg-164 and Arg-216 together coordinate L-aspartate. Residues Ala-259 and Pro-260 each coordinate carbamoyl phosphate.

Belongs to the aspartate/ornithine carbamoyltransferase superfamily. ATCase family. As to quaternary structure, heterododecamer (2C3:3R2) of six catalytic PyrB chains organized as two trimers (C3), and six regulatory PyrI chains organized as three dimers (R2).

The catalysed reaction is carbamoyl phosphate + L-aspartate = N-carbamoyl-L-aspartate + phosphate + H(+). The protein operates within pyrimidine metabolism; UMP biosynthesis via de novo pathway; (S)-dihydroorotate from bicarbonate: step 2/3. Catalyzes the condensation of carbamoyl phosphate and aspartate to form carbamoyl aspartate and inorganic phosphate, the committed step in the de novo pyrimidine nucleotide biosynthesis pathway. The protein is Aspartate carbamoyltransferase catalytic subunit of Oenococcus oeni (strain ATCC BAA-331 / PSU-1).